Here is a 221-residue protein sequence, read N- to C-terminus: Oxaloacetate tautomerase FAHD1, mitochondrial (221 aa).

The transit peptide at 1 to 24 directs the protein to the mitochondrion; that stretch reads MAASRPLSRFWEWGKNIVCVGRNY. S37 bears the Phosphoserine mark. E68, E70, and D99 together coordinate Mg(2+). K110 is modified (N6-acetyllysine). N6-succinyllysine is present on K112.

It belongs to the FAH family. Homodimer. The cofactor is Mg(2+). Mn(2+) is required as a cofactor.

It localises to the mitochondrion. The protein localises to the cytoplasm. Its subcellular location is the cytosol. It carries out the reaction oxaloacetate = enol-oxaloacetate. The catalysed reaction is oxaloacetate + H(+) = pyruvate + CO2. It catalyses the reaction a 3-acylpyruvate + H2O = a carboxylate + pyruvate + H(+). The enzyme catalyses acetylpyruvate + H2O = acetate + pyruvate + H(+). It carries out the reaction 3-fumarylpyruvate + H2O = fumarate + pyruvate + H(+). With respect to regulation, oxaloacetate decarboxylation is competitively inhibited by oxalate. In terms of biological role, tautomerase that converts enol-oxaloacetate, a strong inhibitor of succinate dehydrogenase, to the physiological keto form of oxaloacetate. It is thereby required to maximize aerobic respiration efficiency by preventing succinate dehydrogenase inhibition. Also acts as a weak oxaloacetate decarboxylase (ODx), catalyzing the decarboxylation of oxaloacetate (OAA) to pyruvate and CO(2), and as such is likely a regulatory enzyme in the TCA cycle. Also displays acylpyruvase activity, being able to hydrolyze acetylpyruvate and fumarylpyruvate in vitro. The polypeptide is Oxaloacetate tautomerase FAHD1, mitochondrial (Bos taurus (Bovine)).